The chain runs to 140 residues: Endoribonuclease YbeY (140 aa).

Zn(2+) is bound by residues His-100, His-104, and His-110.

This sequence belongs to the endoribonuclease YbeY family. The cofactor is Zn(2+).

Its subcellular location is the cytoplasm. Its function is as follows. Single strand-specific metallo-endoribonuclease involved in late-stage 70S ribosome quality control and in maturation of the 3' terminus of the 16S rRNA. This Helicobacter pylori (strain Shi470) protein is Endoribonuclease YbeY.